A 1064-amino-acid chain; its full sequence is Carbamoyl phosphate synthase pyrimidine-specific large chain (1064 aa).

The interval 1-401 (MPKRRDIETI…SLLKAVRSLE (401 aa)) is carboxyphosphate synthetic domain. Residues Arg129, Arg169, Gly175, Gly176, Arg208, Ile210, Gly241, Ile242, His243, Gln284, and Glu298 each contribute to the ATP site. Residues 133-327 (RALMNELGEP…IAKLAAKIAV (195 aa)) form the ATP-grasp 1 domain. Mg(2+) is bound by residues Gln284, Glu298, and Asn300. Residues Gln284, Glu298, and Asn300 each contribute to the Mn(2+) site. Residues 402–546 (IGVHHLELNE…YSTYEEENES (145 aa)) form an oligomerization domain region. The segment at 547–929 (IVTEKPSVIV…ALYKGLVASG (383 aa)) is carbamoyl phosphate synthetic domain. In terms of domain architecture, ATP-grasp 2 spans 671–861 (EQALSELGIP…MANLATKAIL (191 aa)). ATP-binding residues include Arg707, Arg746, Ile748, Glu752, Gly777, Val778, His779, Ser780, Gln820, and Glu832. Residues Gln820, Glu832, and Asn834 each contribute to the Mg(2+) site. The Mn(2+) site is built by Gln820, Glu832, and Asn834. Residues 930–1064 (IQIQPHGAVL…TAMTEGLVRS (135 aa)) form the MGS-like domain. An allosteric domain region spans residues 930–1064 (IQIQPHGAVL…TAMTEGLVRS (135 aa)).

This sequence belongs to the CarB family. In terms of assembly, composed of two chains; the small (or glutamine) chain promotes the hydrolysis of glutamine to ammonia, which is used by the large (or ammonia) chain to synthesize carbamoyl phosphate. Tetramer of heterodimers (alpha,beta)4. Mg(2+) is required as a cofactor. The cofactor is Mn(2+).

The enzyme catalyses hydrogencarbonate + L-glutamine + 2 ATP + H2O = carbamoyl phosphate + L-glutamate + 2 ADP + phosphate + 2 H(+). The catalysed reaction is hydrogencarbonate + NH4(+) + 2 ATP = carbamoyl phosphate + 2 ADP + phosphate + 2 H(+). The protein operates within amino-acid biosynthesis; L-arginine biosynthesis; carbamoyl phosphate from bicarbonate: step 1/1. It participates in pyrimidine metabolism; UMP biosynthesis via de novo pathway; (S)-dihydroorotate from bicarbonate: step 1/3. In terms of biological role, small subunit of the glutamine-dependent carbamoyl phosphate synthetase (CPSase). CPSase catalyzes the formation of carbamoyl phosphate from the ammonia moiety of glutamine, carbonate, and phosphate donated by ATP, constituting the first step of the biosynthetic pathway leading to pyrimidine nucleotides. The large subunit (synthetase) binds the substrates ammonia (free or transferred from glutamine from the small subunit), hydrogencarbonate and ATP and carries out an ATP-coupled ligase reaction, activating hydrogencarbonate by forming carboxy phosphate which reacts with ammonia to form carbamoyl phosphate. The chain is Carbamoyl phosphate synthase pyrimidine-specific large chain (pyrAB) from Geobacillus stearothermophilus (Bacillus stearothermophilus).